We begin with the raw amino-acid sequence, 329 residues long: tRNA uridine(34) hydroxylase (329 aa).

Positions 123–217 constitute a Rhodanese domain; sequence SDPDVILVDT…YLEEVPEEES (95 aa). Cysteine 177 serves as the catalytic Cysteine persulfide intermediate. Residues 285–329 are disordered; it reads REKQVQLSNARGETHVGGDAAHLIDQRKKEKLAHKEQQRSGKKAK. Residues 296–323 are compositionally biased toward basic and acidic residues; that stretch reads GETHVGGDAAHLIDQRKKEKLAHKEQQR.

Belongs to the TrhO family.

It carries out the reaction uridine(34) in tRNA + AH2 + O2 = 5-hydroxyuridine(34) in tRNA + A + H2O. Catalyzes oxygen-dependent 5-hydroxyuridine (ho5U) modification at position 34 in tRNAs. This Vibrio atlanticus (strain LGP32) (Vibrio splendidus (strain Mel32)) protein is tRNA uridine(34) hydroxylase.